A 375-amino-acid polypeptide reads, in one-letter code: PqqA peptide cyclase (375 aa).

Residues 18 to 235 enclose the Radical SAM core domain; sequence ILPPMAMLAE…EAREKYQGIL (218 aa). [4Fe-4S] cluster-binding residues include Cys-32, Cys-36, and Cys-39.

Belongs to the radical SAM superfamily. PqqE family. As to quaternary structure, interacts with PqqD. The interaction is necessary for activity of PqqE. Requires [4Fe-4S] cluster as cofactor.

The catalysed reaction is [PQQ precursor protein] + S-adenosyl-L-methionine = E-Y cross-linked-[PQQ precursor protein] + 5'-deoxyadenosine + L-methionine + H(+). It functions in the pathway cofactor biosynthesis; pyrroloquinoline quinone biosynthesis. Catalyzes the cross-linking of a glutamate residue and a tyrosine residue in the PqqA protein as part of the biosynthesis of pyrroloquinoline quinone (PQQ). The chain is PqqA peptide cyclase from Rhizobium meliloti (strain 1021) (Ensifer meliloti).